The sequence spans 368 residues: Putative transport protein bbp_117 (368 aa).

The next 8 membrane-spanning stretches (helical) occupy residues 13 to 35 (VIFS…RPFF), 39 to 61 (AWAS…LLWG), 68 to 90 (VMMT…NSLI), 159 to 181 (HFGR…YWNG), 216 to 238 (LGVV…ISGI), 248 to 270 (IIIF…IWLY), 277 to 299 (WGTV…RPIL), and 314 to 336 (GVIG…VLII).

The protein belongs to the autoinducer-2 exporter (AI-2E) (TC 2.A.86) family.

It is found in the cell membrane. This Buchnera aphidicola subsp. Baizongia pistaciae (strain Bp) protein is Putative transport protein bbp_117.